The sequence spans 202 residues: Small ribosomal subunit protein uS4c (202 aa).

In terms of domain architecture, S4 RNA-binding spans 90–158; that stretch reads MRLDNIIFRL…ITKNIELSQK (69 aa).

Belongs to the universal ribosomal protein uS4 family. In terms of assembly, part of the 30S ribosomal subunit. Contacts protein S5. The interaction surface between S4 and S5 is involved in control of translational fidelity.

It localises to the plastid. Its subcellular location is the chloroplast. Its function is as follows. One of the primary rRNA binding proteins, it binds directly to 16S rRNA where it nucleates assembly of the body of the 30S subunit. In terms of biological role, with S5 and S12 plays an important role in translational accuracy. The protein is Small ribosomal subunit protein uS4c (rps4) of Marchantia romanica (Liverwort).